The following is a 250-amino-acid chain: MSRGRGVPMMDLKRSYDVEDRVVSVSIPSIIEADEADLWPLPEIDTKKSKFPCCIVWTPLPVVSWLAPFIGHIGLCREDGVILDFAGSNFINVDDFAFGPPARYLQLDRTKCCLPPNMGGHTCKYGFKHTDFGTARTWDNALSSSTRSFEHKTYNIFTCNCHSFVANCLNRLCYGGSMEWNMVNVAILLMIKGKWINGSSVVRSFLPCAVVTSLGVVLVGWPFLIGLSSFSLLLFAWFIIATYCFKNIIT.

3 helical membrane passes run 55–75 (IVWT…HIGL), 200–220 (SVVR…VLVG), and 221–241 (WPFL…FIIA).

In terms of assembly, interacts with ETR1 through a region corresponding to its ethylene-binding domain. In terms of tissue distribution, strongly expressed in 1-4-day-old seedlings in the apical hook, cotyledons, root vascular tissue, root tip and root hairs, with little or no expression in the hypocotyl. In light-grown seedlings, expression could also be seen in the apex and young leaves, and disappeared from the cotyledons by 10 days. In mature plants, expressed in floral buds, the style of mature flowers, stems and the rachis.

Its subcellular location is the endoplasmic reticulum membrane. It localises to the golgi apparatus membrane. Its function is as follows. Acts at an early step in the ethylene signaling pathway. Positively regulates ETR1, leading to the negative regulation of ethylene responses. This is Protein REVERSION-TO-ETHYLENE SENSITIVITY1 (RTE1) from Arabidopsis thaliana (Mouse-ear cress).